We begin with the raw amino-acid sequence, 417 residues long: MAP kinase-interacting serine/threonine-protein kinase 1 (417 aa).

A disordered region spans residues 1-20 (MVSSQPVPIDDGGKRRKKKR). Residues 37–321 (RLTDELLGEG…AAQVLQHPWL (285 aa)) form the Protein kinase domain. Residues 43–51 (LGEGAYAKV) and Lys66 each bind ATP. The Proton acceptor role is filled by Asp158. The disordered stretch occupies residues 397–417 (AHARKGGSHLTHTTVTSQGAT). Residues 406-417 (LTHTTVTSQGAT) show a composition bias toward polar residues.

The protein belongs to the protein kinase superfamily. CAMK Ser/Thr protein kinase family. Mg(2+) serves as cofactor.

It catalyses the reaction L-seryl-[protein] + ATP = O-phospho-L-seryl-[protein] + ADP + H(+). It carries out the reaction L-threonyl-[protein] + ATP = O-phospho-L-threonyl-[protein] + ADP + H(+). Its function is as follows. May play a role in the response to environmental stress and cytokines. Appears to regulate translation by phosphorylating EIF4E, thus increasing the affinity of this protein for the 7-methylguanosine-containing mRNA cap. This is MAP kinase-interacting serine/threonine-protein kinase 1 (mknk1) from Xenopus tropicalis (Western clawed frog).